Consider the following 776-residue polypeptide: Ent-8-alpha-hydroxylabd-13-en-15-yl diphosphate synthase CPS4, chloroplastic (776 aa).

A chloroplast-targeting transit peptide spans 1-60 (MSFASNATGFRIPLTTCVYPSPILRFNAKVGSGSSYGTTEAQRNMKCVDGIGRSRVVAVA). Position 226 (lysine 226) interacts with substrate. Aspartate 357 and aspartate 359 together coordinate Mg(2+). The DXDD motif motif lies at 357–360 (DSDD). Residue lysine 443 participates in substrate binding.

This sequence belongs to the terpene synthase family. The cofactor is Mg(2+).

The protein resides in the plastid. It is found in the chloroplast. It catalyses the reaction ent-8alpha-hydroxylabd-13-en-15-yl diphosphate = (2E,6E,10E)-geranylgeranyl diphosphate + H2O. The protein operates within secondary metabolite biosynthesis; terpenoid biosynthesis. In terms of biological role, involved in diterpenoid biosynthesis. Catalyzes the conversion of all-trans-geranylgeranyl diphosphate to ent-8alpha-hydroxylabd-13-en-15-yl diphosphate. This Salvia miltiorrhiza (Chinese sage) protein is Ent-8-alpha-hydroxylabd-13-en-15-yl diphosphate synthase CPS4, chloroplastic.